The chain runs to 406 residues: Argininosuccinate synthase (406 aa).

ATP-binding positions include 11-19 and alanine 38; that span reads AYSGGLDTS. L-citrulline contacts are provided by tyrosine 91 and serine 96. Glycine 121 contacts ATP. L-aspartate contacts are provided by threonine 123, asparagine 127, and aspartate 128. Asparagine 127 contacts L-citrulline. Residues arginine 131, serine 181, serine 190, glutamate 266, and tyrosine 278 each coordinate L-citrulline.

This sequence belongs to the argininosuccinate synthase family. Type 1 subfamily. As to quaternary structure, homotetramer.

The protein localises to the cytoplasm. It catalyses the reaction L-citrulline + L-aspartate + ATP = 2-(N(omega)-L-arginino)succinate + AMP + diphosphate + H(+). The protein operates within amino-acid biosynthesis; L-arginine biosynthesis; L-arginine from L-ornithine and carbamoyl phosphate: step 2/3. This is Argininosuccinate synthase from Campylobacter jejuni subsp. jejuni serotype O:2 (strain ATCC 700819 / NCTC 11168).